The sequence spans 312 residues: tRNA-cytidine(32) 2-sulfurtransferase (312 aa).

Residues 39-44 carry the PP-loop motif motif; the sequence is SGGKDS. Residues cysteine 114, cysteine 117, and cysteine 205 each contribute to the [4Fe-4S] cluster site.

This sequence belongs to the TtcA family. In terms of assembly, homodimer. It depends on Mg(2+) as a cofactor. The cofactor is [4Fe-4S] cluster.

It is found in the cytoplasm. The enzyme catalyses cytidine(32) in tRNA + S-sulfanyl-L-cysteinyl-[cysteine desulfurase] + AH2 + ATP = 2-thiocytidine(32) in tRNA + L-cysteinyl-[cysteine desulfurase] + A + AMP + diphosphate + H(+). It participates in tRNA modification. In terms of biological role, catalyzes the ATP-dependent 2-thiolation of cytidine in position 32 of tRNA, to form 2-thiocytidine (s(2)C32). The sulfur atoms are provided by the cysteine/cysteine desulfurase (IscS) system. This is tRNA-cytidine(32) 2-sulfurtransferase from Cupriavidus pinatubonensis (strain JMP 134 / LMG 1197) (Cupriavidus necator (strain JMP 134)).